We begin with the raw amino-acid sequence, 328 residues long: Sphingolipid delta(4)-desaturase DES1-like (328 aa).

A run of 3 helical transmembrane segments spans residues 50–70 (PLAFLKIAAVVSLQLWTATLL), 78–98 (ILTVAYFFGSFLNHNLFLAIH), and 114–134 (WLGIFANLPIGVPMSITFQKY). A Histidine box-1 motif is present at residues 98 to 102 (HELSH). The Histidine box-2 signature appears at 135–139 (HLEHH). The next 3 helical transmembrane spans lie at 164 to 184 (LSKSVWVVFQLFFYALRPLFL), 192 to 212 (WEFTNLIIQIALDASMVYFFG), and 217 to 237 (AYLILSTFVGGGMHPMAGHFI). The short motif at 266–270 (HNEHH) is the Histidine box-3 element.

Belongs to the fatty acid desaturase type 1 family. DEGS subfamily.

Its subcellular location is the endoplasmic reticulum membrane. The enzyme catalyses an N-acylsphinganine + 2 Fe(II)-[cytochrome b5] + O2 + 2 H(+) = an N-acylsphing-4-enine + 2 Fe(III)-[cytochrome b5] + 2 H2O. Sphingolipid-delta-4-desaturase required for the biosynthesis of delta-4-unsaturated sphingolipids and derivatives. The polypeptide is Sphingolipid delta(4)-desaturase DES1-like (Oryza sativa subsp. japonica (Rice)).